The chain runs to 383 residues: Lipid-A-disaccharide synthase (383 aa).

The protein belongs to the LpxB family.

The catalysed reaction is a lipid X + a UDP-2-N,3-O-bis[(3R)-3-hydroxyacyl]-alpha-D-glucosamine = a lipid A disaccharide + UDP + H(+). Its pathway is bacterial outer membrane biogenesis; LPS lipid A biosynthesis. Condensation of UDP-2,3-diacylglucosamine and 2,3-diacylglucosamine-1-phosphate to form lipid A disaccharide, a precursor of lipid A, a phosphorylated glycolipid that anchors the lipopolysaccharide to the outer membrane of the cell. In Aliivibrio salmonicida (strain LFI1238) (Vibrio salmonicida (strain LFI1238)), this protein is Lipid-A-disaccharide synthase.